The chain runs to 187 residues: Early E3 20.6 kDa glycoprotein (187 aa).

N30, N73, N117, N134, and N135 each carry an N-linked (GlcNAc...) asparagine; by host glycan.

This sequence belongs to the adenoviridae E3_20 family.

The chain is Early E3 20.6 kDa glycoprotein from Human adenovirus B serotype 35 (HAdV-35).